Reading from the N-terminus, the 224-residue chain is Germin-like protein 1-2 (224 aa).

The first 29 residues, 1 to 29, serve as a signal peptide directing secretion; it reads MASSRSVVLRVLVAVAVVAAAGAPRLAVA. Residues Cys-38 and Cys-53 are joined by a disulfide bond. The region spanning 67–215 is the Cupin type-1 domain; that stretch reads DAIVQAPSTS…TFLMGEDEVG (149 aa). Asn-82 carries N-linked (GlcNAc...) asparagine glycosylation. His-115, His-117, Glu-122, and His-161 together coordinate Mn(2+). A glycan (N-linked (GlcNAc...) asparagine) is linked at Asn-170.

Belongs to the germin family. As to quaternary structure, oligomer (believed to be a pentamer but probably hexamer).

It localises to the secreted. It is found in the extracellular space. Its subcellular location is the apoplast. Its function is as follows. May play a role in plant defense. Probably has no oxalate oxidase activity even if the active site is conserved. In Oryza sativa subsp. japonica (Rice), this protein is Germin-like protein 1-2.